The chain runs to 244 residues: Cyclin-Q (244 aa).

This sequence belongs to the cyclin family. Cyclin-like FAM58 subfamily.

In terms of biological role, may be an activating cyclin for the cyclin-associated kinase CDK10. This is Cyclin-Q (ccnq) from Xenopus laevis (African clawed frog).